We begin with the raw amino-acid sequence, 734 residues long: MWGLLLALAAFAPAVGPALGAPRNSVLGLAQPGTTKVPGSTPALHSSPAQPPAETANGTSEQHVRIRVIKKKKVIMKKRKKLTLTRPTPLVTAGPLVTPTPAGTLDPAEKQETGCPPLGLESLRVSDSRLEASSSQSFGLGPHRGRLNIQSGLEDGDLYDGAWCAEEQDADPWFQVDAGHPTRFSGVITQGRNSVWRYDWVTSYKVQFSNDSRTWWGSRNHSSGMDAVFPANSDPETPVLNLLPEPQVARFIRLLPQTWLQGGAPCLRAEILACPVSDPNDLFLEAPASGSSDPLDFQHHNYKAMRKLMKQVQEQCPNITRIYSIGKSYQGLKLYVMEMSDKPGEHELGEPEVRYVAGMHGNEALGRELLLLLMQFLCHEFLRGNPRVTRLLSEMRIHLLPSMNPDGYEIAYHRGSELVGWAEGRWNNQSIDLNHNFADLNTPLWEAQDDGKVPHIVPNHHLPLPTYYTLPNATVAPETRAVIKWMKRIPFVLSANLHGGELVVSYPFDMTRTPWAARELTPTPDDAVFRWLSTVYAGSNLAMQDTSRRPCHSQDFSVHGNIINGADWHTVPGSMNDFSYLHTNCFEVTVELSCDKFPHENELPQEWENNKDALLTYLEQVRMGIAGVVRDKDTELGIADAVIAVDGINHDVTTAWGGDYWRLLTPGDYMVTASAEGYHSVTRNCRVTFEEGPFPCNFVLTKTPKQRLRELLAAGAKVPPDLRRRLERLRGQKD.

A signal peptide spans 1–20 (MWGLLLALAAFAPAVGPALG). Positions 30–62 (AQPGTTKVPGSTPALHSSPAQPPAETANGTSEQ) are disordered. Positions 32 to 48 (PGTTKVPGSTPALHSSP) are enriched in polar residues. N-linked (GlcNAc...) asparagine glycans are attached at residues Asn57, Asn210, Asn220, and Asn318. The F5/8 type C domain occupies 113–274 (TGCPPLGLES…PCLRAEILAC (162 aa)). An intrachain disulfide couples Cys115 to Cys274. In terms of domain architecture, Peptidase M14 spans 298 to 621 (QHHNYKAMRK…DALLTYLEQV (324 aa)). Positions 360 and 363 each coordinate Zn(2+). N-linked (GlcNAc...) asparagine glycans are attached at residues Asn428 and Asn472. Residue His498 coordinates Zn(2+). Glu591 acts as the Proton donor/acceptor in catalysis.

It belongs to the peptidase M14 family. The cofactor is Zn(2+).

It localises to the secreted. In terms of biological role, may be involved in cell-cell interactions. No carboxypeptidase activity was found yet. The sequence is that of Probable carboxypeptidase X1 (CPXM1) from Homo sapiens (Human).